A 189-amino-acid polypeptide reads, in one-letter code: GTP cyclohydrolase 1 (189 aa).

Zn(2+) contacts are provided by C78, H81, and C150.

It belongs to the GTP cyclohydrolase I family. As to quaternary structure, toroid-shaped homodecamer, composed of two pentamers of five dimers.

It carries out the reaction GTP + H2O = 7,8-dihydroneopterin 3'-triphosphate + formate + H(+). It participates in cofactor biosynthesis; 7,8-dihydroneopterin triphosphate biosynthesis; 7,8-dihydroneopterin triphosphate from GTP: step 1/1. This chain is GTP cyclohydrolase 1, found in Listeria welshimeri serovar 6b (strain ATCC 35897 / DSM 20650 / CCUG 15529 / CIP 8149 / NCTC 11857 / SLCC 5334 / V8).